Here is a 310-residue protein sequence, read N- to C-terminus: UDP-N-acetylenolpyruvoylglucosamine reductase (310 aa).

Residues 34 to 213 (RAGGNAEVLF…LRRMNEITSS (180 aa)) enclose the FAD-binding PCMH-type domain. Arg-178 is an active-site residue. The active-site Proton donor is Ser-227. Residue Glu-297 is part of the active site.

This sequence belongs to the MurB family. FAD is required as a cofactor.

The protein localises to the cytoplasm. The enzyme catalyses UDP-N-acetyl-alpha-D-muramate + NADP(+) = UDP-N-acetyl-3-O-(1-carboxyvinyl)-alpha-D-glucosamine + NADPH + H(+). Its pathway is cell wall biogenesis; peptidoglycan biosynthesis. Its function is as follows. Cell wall formation. The chain is UDP-N-acetylenolpyruvoylglucosamine reductase from Parvibaculum lavamentivorans (strain DS-1 / DSM 13023 / NCIMB 13966).